We begin with the raw amino-acid sequence, 698 residues long: Polyribonucleotide nucleotidyltransferase (698 aa).

Mg(2+) contacts are provided by Asp485 and Asp491. The 61-residue stretch at 552 to 612 (PRVEMMTIPE…SDLKGAKSIV (61 aa)) folds into the KH domain. The S1 motif domain occupies 622–690 (GMVYDGTVKK…KLGRLNLSYV (69 aa)).

The protein belongs to the polyribonucleotide nucleotidyltransferase family. Requires Mg(2+) as cofactor.

The protein localises to the cytoplasm. It catalyses the reaction RNA(n+1) + phosphate = RNA(n) + a ribonucleoside 5'-diphosphate. Functionally, involved in mRNA degradation. Catalyzes the phosphorolysis of single-stranded polyribonucleotides processively in the 3'- to 5'-direction. The sequence is that of Polyribonucleotide nucleotidyltransferase from Treponema denticola (strain ATCC 35405 / DSM 14222 / CIP 103919 / JCM 8153 / KCTC 15104).